A 314-amino-acid polypeptide reads, in one-letter code: (-)-isopiperitenone reductase (314 aa).

10-33 (VTGANKGIGFEICRQLAEKGIIVI) lines the NADP(+) pocket. Serine 182 is a substrate binding site.

The protein belongs to the short-chain dehydrogenases/reductases (SDR) family.

It localises to the cytoplasm. The enzyme catalyses (2R,5R)-isopulegone + NADP(+) = (6R)-isopiperitenone + NADPH + H(+). Its pathway is secondary metabolite biosynthesis; terpenoid biosynthesis. Monoterpene synthase that catalyzes the specific reduction of the 1(2)-double bond of (-)-isopiperitenone to produce (+)-cis-isopulegone. Does not catalyze the reverse reaction. Unable to reduce (+)-pulegone, (+)-cis-isopulegone, (-)-menthone or the 1,2-double bond of (-)-carvone. Able to utilize NADH with 20% the efficiency of NADPH. The sequence is that of (-)-isopiperitenone reductase from Mentha piperita (Peppermint).